The following is a 133-amino-acid chain: Ribosome-binding factor A (133 aa).

It belongs to the RbfA family. In terms of assembly, monomer. Binds 30S ribosomal subunits, but not 50S ribosomal subunits or 70S ribosomes.

It is found in the cytoplasm. Functionally, one of several proteins that assist in the late maturation steps of the functional core of the 30S ribosomal subunit. Associates with free 30S ribosomal subunits (but not with 30S subunits that are part of 70S ribosomes or polysomes). Required for efficient processing of 16S rRNA. May interact with the 5'-terminal helix region of 16S rRNA. The chain is Ribosome-binding factor A from Cytophaga hutchinsonii (strain ATCC 33406 / DSM 1761 / CIP 103989 / NBRC 15051 / NCIMB 9469 / D465).